A 204-amino-acid chain; its full sequence is Thymidine kinase (204 aa).

ATP is bound by residues 23 to 30 (GSMFSGKT) and 95 to 98 (DEAQ). The Proton acceptor role is filled by Glu96. Positions 152, 155, 184, and 187 each coordinate Zn(2+).

The protein belongs to the thymidine kinase family. Homotetramer.

The protein localises to the cytoplasm. It carries out the reaction thymidine + ATP = dTMP + ADP + H(+). The polypeptide is Thymidine kinase (Porphyromonas gingivalis (strain ATCC BAA-308 / W83)).